A 505-amino-acid polypeptide reads, in one-letter code: Cytochrome P450 CYP71D313 (505 aa).

A helical transmembrane segment spans residues 1–21; sequence MELQFPLFSIFFVTILFFFLF. Cys-441 contributes to the heme binding site. The helical transmembrane segment at 442 to 462 threads the bilayer; that stretch reads PGIAFGIATIELPLALLLYHF.

It belongs to the cytochrome P450 family. Requires heme as cofactor.

It is found in the membrane. In terms of biological role, probable heme-thiolate monooxygenase. The chain is Cytochrome P450 CYP71D313 from Panax ginseng (Korean ginseng).